The following is a 152-amino-acid chain: Ribosome maturation factor RimP (152 aa).

It belongs to the RimP family.

It localises to the cytoplasm. Required for maturation of 30S ribosomal subunits. The sequence is that of Ribosome maturation factor RimP from Desulfitobacterium hafniense (strain Y51).